The following is a 312-amino-acid chain: Aspartate carbamoyltransferase catalytic subunit (312 aa).

Arginine 55 and threonine 56 together coordinate carbamoyl phosphate. Lysine 83 serves as a coordination point for L-aspartate. Carbamoyl phosphate-binding residues include arginine 105, histidine 138, and glutamine 141. L-aspartate-binding residues include arginine 171 and arginine 225. The carbamoyl phosphate site is built by glycine 266 and proline 267.

It belongs to the aspartate/ornithine carbamoyltransferase superfamily. ATCase family. As to quaternary structure, heterododecamer (2C3:3R2) of six catalytic PyrB chains organized as two trimers (C3), and six regulatory PyrI chains organized as three dimers (R2).

It catalyses the reaction carbamoyl phosphate + L-aspartate = N-carbamoyl-L-aspartate + phosphate + H(+). The protein operates within pyrimidine metabolism; UMP biosynthesis via de novo pathway; (S)-dihydroorotate from bicarbonate: step 2/3. Functionally, catalyzes the condensation of carbamoyl phosphate and aspartate to form carbamoyl aspartate and inorganic phosphate, the committed step in the de novo pyrimidine nucleotide biosynthesis pathway. This chain is Aspartate carbamoyltransferase catalytic subunit, found in Corynebacterium glutamicum (strain R).